A 188-amino-acid chain; its full sequence is dCTP deaminase (188 aa).

DCTP contacts are provided by residues 111-116 (KSTYAR), 135-137 (TLE), Q156, Y170, and Q180. E137 serves as the catalytic Proton donor/acceptor.

It belongs to the dCTP deaminase family. As to quaternary structure, homotrimer.

The enzyme catalyses dCTP + H2O + H(+) = dUTP + NH4(+). The protein operates within pyrimidine metabolism; dUMP biosynthesis; dUMP from dCTP (dUTP route): step 1/2. In terms of biological role, catalyzes the deamination of dCTP to dUTP. The protein is dCTP deaminase of Nitrosomonas europaea (strain ATCC 19718 / CIP 103999 / KCTC 2705 / NBRC 14298).